The sequence spans 318 residues: Leucine-rich repeat domain-containing protein YddK (318 aa).

LRR repeat units lie at residues asparagine 109–aspartate 129, arginine 130–asparagine 151, serine 153–serine 173, serine 174–glutamate 194, tryptophan 195–glutamate 216, leucine 217–asparagine 237, leucine 238–phenylalanine 258, asparagine 260–threonine 280, and serine 284–aspartate 305.

The protein is Leucine-rich repeat domain-containing protein YddK (yddK) of Escherichia coli (strain K12).